A 903-amino-acid polypeptide reads, in one-letter code: Immunoglobulin superfamily member 22 (903 aa).

Ig-like domains follow at residues 67–158, 232–322, 418–508, and 606–696; these read PEFV…LLVT, EAIR…AELT, PIKF…AIVT, and PSVL…LHLS. Fibronectin type-III domains are found at residues 703–798 and 804–898; these read FASQ…AKDP and LVQD…MPPP.

In Homo sapiens (Human), this protein is Immunoglobulin superfamily member 22 (IGSF22).